A 265-amino-acid chain; its full sequence is Asparagine-rich protein (265 aa).

Positions 1-21 (MSRLTLLVLLVIAAVIQKVHG) are cleaved as a signal peptide. Disordered stretches follow at residues 20-71 (HGQG…NRNI) and 88-183 (SNQN…NQQY). Composition is skewed to basic and acidic residues over residues 22-35 (QGRENEKKNEHEPG) and 44-55 (EKTERNLREPNR). The span at 88-98 (SNQNNFGNNRS) shows a compositional bias: low complexity. Residues 115–124 (NKSEVEKENG) are compositionally biased toward basic and acidic residues. The segment covering 152-166 (KVQHRIAKRFQKRHP) has biased composition (basic residues).

Nacreous layer of shell (at protein level). Expressed primarily in the mantle with highest level in the mantle pallium and lower level in the mantle edge.

The protein resides in the secreted. The sequence is that of Asparagine-rich protein from Pinctada maxima (Silver-lipped pearl oyster).